We begin with the raw amino-acid sequence, 223 residues long: Uracil phosphoribosyltransferase (223 aa).

5-phospho-alpha-D-ribose 1-diphosphate is bound by residues R86, R111, and 145 to 153 (DPILATGST). Residues I209 and 214-216 (GDA) each bind uracil. D215 contributes to the 5-phospho-alpha-D-ribose 1-diphosphate binding site.

The protein belongs to the UPRTase family. It depends on Mg(2+) as a cofactor.

The catalysed reaction is UMP + diphosphate = 5-phospho-alpha-D-ribose 1-diphosphate + uracil. The protein operates within pyrimidine metabolism; UMP biosynthesis via salvage pathway; UMP from uracil: step 1/1. Allosterically activated by GTP. In terms of biological role, catalyzes the conversion of uracil and 5-phospho-alpha-D-ribose 1-diphosphate (PRPP) to UMP and diphosphate. This is Uracil phosphoribosyltransferase from Natronomonas pharaonis (strain ATCC 35678 / DSM 2160 / CIP 103997 / JCM 8858 / NBRC 14720 / NCIMB 2260 / Gabara) (Halobacterium pharaonis).